A 486-amino-acid polypeptide reads, in one-letter code: Ribosomal RNA small subunit methyltransferase F (486 aa).

Residues 124–130 (ASAPGSK), E148, D175, and D193 contribute to the S-adenosyl-L-methionine site. C246 (nucleophile) is an active-site residue.

It belongs to the class I-like SAM-binding methyltransferase superfamily. RsmB/NOP family.

The protein resides in the cytoplasm. It carries out the reaction cytidine(1407) in 16S rRNA + S-adenosyl-L-methionine = 5-methylcytidine(1407) in 16S rRNA + S-adenosyl-L-homocysteine + H(+). In terms of biological role, specifically methylates the cytosine at position 1407 (m5C1407) of 16S rRNA. In Shewanella baltica (strain OS223), this protein is Ribosomal RNA small subunit methyltransferase F.